We begin with the raw amino-acid sequence, 345 residues long: 3'-5' exoribonuclease 1 (345 aa).

2 stretches are compositionally biased toward basic and acidic residues: residues 1-11 and 19-46; these read MEDERGRERGG and PRPECEESRPLSVEKKQRCRLDGKETDG. Residues 1-50 are disordered; sequence MEDERGRERGGDAAQQKTPRPECEESRPLSVEKKQRCRLDGKETDGSKFI. Residues Ser55 and Ser58 each carry the phosphoserine modification. The SAP domain maps to 72–106; the sequence is INRMSKEELRAKLSEFKLETRGVKDVLKKRLKNYY. In terms of domain architecture, Exonuclease spans 126 to 302; sequence ICIIDFEATC…DDSKNIARIA (177 aa). Positions 130 and 132 each coordinate Mg(2+). Catalysis depends on Glu132, which acts as the Proton acceptor. 2 residues coordinate AMP: Glu132 and Ala133. Asp230 is a Mg(2+) binding site. His289 functions as the Proton acceptor in the catalytic mechanism. Residue His289 coordinates AMP. Asp294 provides a ligand contact to Mg(2+).

Identified in a histone pre-mRNA complex, at least composed of ERI1, LSM11, SLBP, SNRPB, SYNCRIP and YBX1. Binds to 40S and 60S ribosomal subunits and to 80S assembled ribosomes. Interacts in a cooperative manner with SLBP to the mature 3'-end of histone mRNAs. Found in a ternary complex with SLBP and the stem-loop structure of the 3'-end of histone mRNAs. Mg(2+) is required as a cofactor. Widely expressed with high levels in spleen, thymus and testis (at protein level).

It is found in the cytoplasm. Its subcellular location is the nucleus. The protein localises to the nucleolus. The enzyme catalyses Exonucleolytic cleavage in the 3'- to 5'-direction to yield nucleoside 5'-phosphates.. Its activity is regulated as follows. Although it can bind simultaneously with SLBP to the 3'-end of histone mRNA, the presence of SLBP prevents the exonuclease activity. In terms of biological role, RNA exonuclease that binds to the 3'-end of histone mRNAs and degrades them, suggesting that it plays an essential role in histone mRNA decay after replication. A 2' and 3'-hydroxyl groups at the last nucleotide of the histone 3'-end is required for efficient 3'-end histone mRNA exonuclease activity and degradation of RNA substrates. Also able to degrade the 3'-overhangs of short interfering RNAs (siRNAs) in vitro, suggesting a possible role as regulator of RNA interference (RNAi). Required for binding the 5'-ACCCA-3' sequence present in stem-loop structure. Able to bind other mRNAs. Required for 5.8S rRNA 3'-end processing. Also binds to 5.8s ribosomal RNA. Binds with high affinity to the stem-loop structure of replication-dependent histone pre-mRNAs. In vitro, does not have sequence specificity. In vitro, has weak DNA exonuclease activity. In vitro, shows biphasic kinetics such that there is rapid hydrolysis of the last three unpaired RNA nucleotides in the 39 flanking sequence followed by a much slower cleavage through the stem that occurs over a longer incubation period in the order of hours. ERI1-mediated RNA metabolism plays a key role in chondrogenesis. The protein is 3'-5' exoribonuclease 1 (Eri1) of Mus musculus (Mouse).